The primary structure comprises 71 residues: uncharacterized protein (71 aa).

This is an uncharacterized protein from Archaeoglobus fulgidus (strain ATCC 49558 / DSM 4304 / JCM 9628 / NBRC 100126 / VC-16).